We begin with the raw amino-acid sequence, 274 residues long: MNKQSLFENIKRKKSFLCVGLDTDIKKIPDHLLDDPDPIFAFNKAIVDATADYCIAYKPNLAFYESMGVKGWIAFEKTVNYIKENYPDQFIIADAKRGDIGNTSAMYARTFFEELDIDSVTVAPYMGEDSVTPFLSYEGKWVILLALTSNKGSHDFQLTEDANGERLFEKVLKKSQEWANDEQMMYVVGATQGRAFEDIRKIVPNHFLLVPGIGAQGGSLEEVCKYGMNSTCGLIVNSSRGIIYVDKTENFAAAARAAAKEVQEQMAEQLKAIL.

K96 functions as the Proton donor in the catalytic mechanism.

This sequence belongs to the OMP decarboxylase family. Type 2 subfamily.

The enzyme catalyses orotidine 5'-phosphate + H(+) = UMP + CO2. Its pathway is pyrimidine metabolism; UMP biosynthesis via de novo pathway; UMP from orotate: step 2/2. This is Orotidine 5'-phosphate decarboxylase from Bacteroides fragilis (strain ATCC 25285 / DSM 2151 / CCUG 4856 / JCM 11019 / LMG 10263 / NCTC 9343 / Onslow / VPI 2553 / EN-2).